The primary structure comprises 152 residues: Transcription factor ATOH7 (152 aa).

In terms of domain architecture, bHLH spans 40 to 92 (RRRLAANARERRRMQGLNTAFDRLRRVVPQWGQDKKLSKYETLQMALSYIMAL).

In terms of assembly, forms a heterodimer with TCF3 isoform E47; interaction may be required for DNA-binding in certain situations.

Its subcellular location is the nucleus. The protein localises to the perikaryon. It is found in the cell projection. It localises to the axon. Its function is as follows. Transcription factor that binds to DNA at the consensus sequence 5'-CAG[GC]TG-3'. Dimerization with TCF3 isoform E47 may be required in certain situations. Binds to gene promoters and enhancer elements, and thereby regulates a transcriptional program of retinal ganglion cell (RGC) determinant genes. Although the exact mechanism is not certain, retinal transcription regulation by ATOH7 has a role in RGC determination and survival, photoreceptor population development, targeting of RGC axons to the optic nerve and development of the retino-hypothalamic tract. Binds to its own promoter and enhancer sequences, suggesting autoregulation of ATOH7 transcription. Required for retinal circadian rhythm photoentrainment. Plays a role in brainstem auditory signaling and binaural processing. The sequence is that of Transcription factor ATOH7 from Homo sapiens (Human).